Consider the following 476-residue polypeptide: Probable pectin lyase F (476 aa).

Positions M1–A20 are cleaved as a signal peptide. A disulfide bridge connects residues C84 and C108. Residues N103 and N131 are each glycosylated (N-linked (GlcNAc...) asparagine). Residue R258 is part of the active site. Residues N277 and N318 are each glycosylated (N-linked (GlcNAc...) asparagine). C325 and C333 are oxidised to a cystine. N385 carries N-linked (GlcNAc...) asparagine glycosylation. Residues F412–Y476 form a disordered region. Residues V426–A453 are compositionally biased toward polar residues. Basic residues predominate over residues N465 to Y476.

Belongs to the polysaccharide lyase 1 family.

Its subcellular location is the secreted. It carries out the reaction Eliminative cleavage of (1-&gt;4)-alpha-D-galacturonan methyl ester to give oligosaccharides with 4-deoxy-6-O-methyl-alpha-D-galact-4-enuronosyl groups at their non-reducing ends.. In terms of biological role, pectinolytic enzymes consist of four classes of enzymes: pectin lyase, polygalacturonase, pectin methylesterase and rhamnogalacturonase. Among pectinolytic enzymes, pectin lyase is the most important in depolymerization of pectin, since it cleaves internal glycosidic bonds of highly methylated pectins. In Aspergillus niger (strain ATCC MYA-4892 / CBS 513.88 / FGSC A1513), this protein is Probable pectin lyase F (pelF).